We begin with the raw amino-acid sequence, 132 residues long: Histone H2A.2 (132 aa).

Belongs to the histone H2A family. As to quaternary structure, the nucleosome is a histone octamer containing two molecules each of H2A, H2B, H3 and H4 assembled in one H3-H4 heterotetramer and two H2A-H2B heterodimers. The octamer wraps approximately 147 bp of DNA.

The protein localises to the nucleus. Its subcellular location is the chromosome. Its function is as follows. Core component of nucleosome. Nucleosomes wrap and compact DNA into chromatin, limiting DNA accessibility to the cellular machineries which require DNA as a template. Histones thereby play a central role in transcription regulation, DNA repair, DNA replication and chromosomal stability. DNA accessibility is regulated via a complex set of post-translational modifications of histones, also called histone code, and nucleosome remodeling. This Leishmania infantum protein is Histone H2A.2.